A 340-amino-acid chain; its full sequence is Glyceraldehyde-3-phosphate dehydrogenase (340 aa).

NAD(+) is bound by residues 11–12 and G111; that span reads SI. A D-glyceraldehyde 3-phosphate-binding site is contributed by 140–142; it reads SCN. C141 serves as the catalytic Nucleophile. R169 is a binding site for NAD(+). 195–196 is a binding site for D-glyceraldehyde 3-phosphate; it reads HG. Position 303 (Q303) interacts with NAD(+).

The protein belongs to the glyceraldehyde-3-phosphate dehydrogenase family. As to quaternary structure, homotetramer.

The protein resides in the cytoplasm. It catalyses the reaction D-glyceraldehyde 3-phosphate + phosphate + NADP(+) = (2R)-3-phospho-glyceroyl phosphate + NADPH + H(+). The catalysed reaction is D-glyceraldehyde 3-phosphate + phosphate + NAD(+) = (2R)-3-phospho-glyceroyl phosphate + NADH + H(+). It participates in carbohydrate degradation; glycolysis; pyruvate from D-glyceraldehyde 3-phosphate: step 1/5. The sequence is that of Glyceraldehyde-3-phosphate dehydrogenase from Methanococcus maripaludis (strain C6 / ATCC BAA-1332).